We begin with the raw amino-acid sequence, 117 residues long: Large ribosomal subunit protein uL18 (117 aa).

Belongs to the universal ribosomal protein uL18 family. Part of the 50S ribosomal subunit; part of the 5S rRNA/L5/L18/L25 subcomplex. Contacts the 5S and 23S rRNAs.

This is one of the proteins that bind and probably mediate the attachment of the 5S RNA into the large ribosomal subunit, where it forms part of the central protuberance. This Cronobacter sakazakii (strain ATCC BAA-894) (Enterobacter sakazakii) protein is Large ribosomal subunit protein uL18.